The sequence spans 209 residues: MKLRGLYAITDSRLLADGRLLPYVEAALRGGARLLQYRDKSDEDARRLREAEALRDLCLRYGAQLIVNDDLELAARLGVGLHLGQQDGSLSAARALLGPKAIIGATCHGQLELAEQAAADGASYLAFGRFFDSSTKPGAPPASLELLERARARFPQPLVAIGGVTLDNAPELIRRGAAMIAVINALFAAANAAEVEQRARAFGQLFADT.

Residues 36-40 (QYRDK) and Asn68 contribute to the 4-amino-2-methyl-5-(diphosphooxymethyl)pyrimidine site. Residues Asp69 and Asp87 each contribute to the Mg(2+) site. Residue Thr106 participates in 4-amino-2-methyl-5-(diphosphooxymethyl)pyrimidine binding. 133–135 (SST) is a binding site for 2-[(2R,5Z)-2-carboxy-4-methylthiazol-5(2H)-ylidene]ethyl phosphate. Residue Lys136 participates in 4-amino-2-methyl-5-(diphosphooxymethyl)pyrimidine binding. Gly163 provides a ligand contact to 2-[(2R,5Z)-2-carboxy-4-methylthiazol-5(2H)-ylidene]ethyl phosphate.

It belongs to the thiamine-phosphate synthase family. It depends on Mg(2+) as a cofactor.

It carries out the reaction 2-[(2R,5Z)-2-carboxy-4-methylthiazol-5(2H)-ylidene]ethyl phosphate + 4-amino-2-methyl-5-(diphosphooxymethyl)pyrimidine + 2 H(+) = thiamine phosphate + CO2 + diphosphate. The catalysed reaction is 2-(2-carboxy-4-methylthiazol-5-yl)ethyl phosphate + 4-amino-2-methyl-5-(diphosphooxymethyl)pyrimidine + 2 H(+) = thiamine phosphate + CO2 + diphosphate. It catalyses the reaction 4-methyl-5-(2-phosphooxyethyl)-thiazole + 4-amino-2-methyl-5-(diphosphooxymethyl)pyrimidine + H(+) = thiamine phosphate + diphosphate. The protein operates within cofactor biosynthesis; thiamine diphosphate biosynthesis; thiamine phosphate from 4-amino-2-methyl-5-diphosphomethylpyrimidine and 4-methyl-5-(2-phosphoethyl)-thiazole: step 1/1. Functionally, condenses 4-methyl-5-(beta-hydroxyethyl)thiazole monophosphate (THZ-P) and 2-methyl-4-amino-5-hydroxymethyl pyrimidine pyrophosphate (HMP-PP) to form thiamine monophosphate (TMP). This Azotobacter vinelandii (strain DJ / ATCC BAA-1303) protein is Thiamine-phosphate synthase.